A 687-amino-acid polypeptide reads, in one-letter code: Mediator of RNA polymerase II transcription subunit 17 (687 aa).

Positions 30–43 (LSSNPNSSLHSPTS) are enriched in low complexity. Disordered stretches follow at residues 30–70 (LSSN…NKTK) and 130–189 (QLGS…ETDD). 3 stretches are compositionally biased toward basic and acidic residues: residues 56–70 (TSIR…NKTK), 136–147 (SDGHNSEKKDTD), and 167–183 (KDNP…KTNE).

This sequence belongs to the Mediator complex subunit 17 family. As to quaternary structure, component of the Mediator complex, which is composed of at least 21 subunits that form three structurally distinct submodules. The Mediator head module contains MED6, MED8, MED11, SRB4/MED17, SRB5/MED18, ROX3/MED19, SRB2/MED20 and SRB6/MED22, the middle module contains MED1, MED4, NUT1/MED5, MED7, CSE2/MED9, NUT2/MED10, SRB7/MED21 and SOH1/MED31, and the tail module contains MED2, PGD1/MED3, RGR1/MED14, GAL11/MED15 and SIN4/MED16. The head and the middle modules interact directly with RNA polymerase II, whereas the elongated tail module interacts with gene-specific regulatory proteins. The head module may also interact with the TFIIF complex. SRB4/MED17 interacts directly with MED6, MED11, ROX3/MED19, SRB2/MED20 and SRB6/MED22. Interacts directly with the activator GAL4.

The protein localises to the nucleus. In terms of biological role, component of the Mediator complex, a coactivator involved in the regulated transcription of nearly all RNA polymerase II-dependent genes. Mediator functions as a bridge to convey information from gene-specific regulatory proteins to the basal RNA polymerase II transcription machinery. The Mediator complex, having a compact conformation in its free form, is recruited to promoters by direct interactions with regulatory proteins and serves for the assembly of a functional preinitiation complex with RNA polymerase II and the general transcription factors. The Mediator complex unfolds to an extended conformation and partially surrounds RNA polymerase II, specifically interacting with the unphosphorylated form of the C-terminal domain (CTD) of RNA polymerase II. The Mediator complex dissociates from the RNA polymerase II holoenzyme and stays at the promoter when transcriptional elongation begins. This chain is Mediator of RNA polymerase II transcription subunit 17 (SRB4), found in Saccharomyces cerevisiae (strain ATCC 204508 / S288c) (Baker's yeast).